A 592-amino-acid chain; its full sequence is Bifunctional dolabella-3,7-dien-18-ol synthase/dolathalia-3,7,11-triene synthase TPS20, chloroplastic (592 aa).

Residues 1 to 52 (MEAITKNGSLSQTLVHCGPKSLSSFIPVRCLRFSKNPFPKKLVVTRARTSIN) constitute a chloroplast transit peptide. The Mg(2+) site is built by Asp349, Asp353, Asp491, Thr495, and Glu499. A DDXXD motif motif is present at residues 349 to 353 (DDLYD).

This sequence belongs to the terpene synthase family. Tpsa subfamily. Mg(2+) serves as cofactor. Mn(2+) is required as a cofactor.

The protein localises to the plastid. It localises to the chloroplast. The enzyme catalyses (2E,6E,10E)-geranylgeranyl diphosphate + H2O = (3E,7E)-dolabella-3,7-dien-18-ol + diphosphate. It carries out the reaction (2E,6E,10E)-geranylgeranyl diphosphate = (3E,7E)-dolathalia-3,7,11-triene + diphosphate. Its pathway is secondary metabolite biosynthesis; terpenoid biosynthesis. In terms of biological role, involved in the biosynthesis of diterpenes in roots. Possesses dolabella-3,7-dien-18-ol synthase activity and dolathalia-3,7,11-triene synthase activity in vitro. Catalyzes the formation of dolabella-3,7-dien-18-ol and dolathalia-3,7,11-triene from geranygeranyl diphosphate (GGPP). Does not seem to be involved in sesquiterpene biosynthesis. This chain is Bifunctional dolabella-3,7-dien-18-ol synthase/dolathalia-3,7,11-triene synthase TPS20, chloroplastic, found in Arabidopsis thaliana (Mouse-ear cress).